The primary structure comprises 162 residues: Beta-lactoglobulin-3 (162 aa).

2 cysteine pairs are disulfide-bonded: Cys66–Cys160 and Cys106–Cys119.

It belongs to the calycin superfamily. Lipocalin family. In terms of assembly, monomer.

It localises to the secreted. In terms of biological role, lactoglobulin is the primary component of whey, it binds retinol and is probably involved in the transport of that molecule. The chain is Beta-lactoglobulin-3 (LGB3) from Felis catus (Cat).